The primary structure comprises 147 residues: Hemoglobin subunit beta-1 (147 aa).

Residues 3 to 147 enclose the Globin domain; the sequence is HWTDFERSTI…VVFSLGKQYH (145 aa). Heme b is bound by residues histidine 64 and histidine 93.

Belongs to the globin family. As to quaternary structure, hb1 is a heterotetramer of two alpha-1 chains and two beta-1 chains. As to expression, red blood cells.

Its function is as follows. Involved in oxygen transport from gills to the various peripheral tissues. In Liparis tunicatus (Kelp snailfish), this protein is Hemoglobin subunit beta-1.